A 433-amino-acid chain; its full sequence is ATP-dependent protease ATPase subunit HslU (433 aa).

ATP contacts are provided by residues isoleucine 18, 60–65, aspartate 246, glutamate 311, and arginine 383; that span reads GVGKTE.

It belongs to the ClpX chaperone family. HslU subfamily. A double ring-shaped homohexamer of HslV is capped on each side by a ring-shaped HslU homohexamer. The assembly of the HslU/HslV complex is dependent on binding of ATP.

Its subcellular location is the cytoplasm. Functionally, ATPase subunit of a proteasome-like degradation complex; this subunit has chaperone activity. The binding of ATP and its subsequent hydrolysis by HslU are essential for unfolding of protein substrates subsequently hydrolyzed by HslV. HslU recognizes the N-terminal part of its protein substrates and unfolds these before they are guided to HslV for hydrolysis. The sequence is that of ATP-dependent protease ATPase subunit HslU from Cereibacter sphaeroides (strain KD131 / KCTC 12085) (Rhodobacter sphaeroides).